Reading from the N-terminus, the 566-residue chain is Zinc finger protein 704 (566 aa).

Disordered stretches follow at residues 1 to 148 (MQAR…ARGA), 166 to 203 (DFRRDSSKKPSHHLFPLAMEEDVRTADTKKTSRVLDQE), and 253 to 324 (PLVR…DEAD). The span at 12–31 (LGSRRGGAAPAPAPEAAALG) shows a compositional bias: low complexity. Over residues 32 to 55 (LPPPGPSPAAAPGSWRPPLPPPRG) the composition is skewed to pro residues. Low complexity predominate over residues 56-72 (TGPSRAAAASSPVLLLL). Positions 91–100 (RVTEKPRGVA) are enriched in basic and acidic residues. Residues 101–128 (EEEDDDEEEDEEVVVEVVDGDEDDEDAE) are compositionally biased toward acidic residues. Over residues 186-203 (EDVRTADTKKTSRVLDQE) the composition is skewed to basic and acidic residues. Low complexity predominate over residues 267 to 290 (SGSWKEGAPSSSSSSGYWSWSAPS). The C2H2-type zinc finger occupies 346 to 371 (FKCLWKSCGKVLNTAAGIQKHIRAVH). Serine 378 and serine 381 each carry phosphoserine. 2 disordered regions span residues 409–436 (VSPSQSLASAPAFPIPDSSRTETPCAKT) and 497–535 (PVSPPHHPTAGSGEQRQHAHTALSSPPRGTVTLRKPRGE). A sufficient for binding to RE2 sequence motifs region spans residues 471–566 (GSAKFTPNGS…WKKACQRFID (96 aa)). Residues 537-541 (KKCRK) carry the CR1 motif. The short motif at 555-559 (CRWKK) is the CR2 element.

Its subcellular location is the nucleus. Functionally, transcription factor which binds to RE2 sequence elements in the MYOD1 enhancer. The chain is Zinc finger protein 704 from Mus musculus (Mouse).